A 271-amino-acid polypeptide reads, in one-letter code: Thiazole synthase (271 aa).

K104 serves as the catalytic Schiff-base intermediate with DXP. 1-deoxy-D-xylulose 5-phosphate contacts are provided by residues G165, 192 to 193 (AG), and 214 to 215 (NT).

This sequence belongs to the ThiG family. In terms of assembly, homotetramer. Forms heterodimers with either ThiH or ThiS.

The protein localises to the cytoplasm. It carries out the reaction [ThiS sulfur-carrier protein]-C-terminal-Gly-aminoethanethioate + 2-iminoacetate + 1-deoxy-D-xylulose 5-phosphate = [ThiS sulfur-carrier protein]-C-terminal Gly-Gly + 2-[(2R,5Z)-2-carboxy-4-methylthiazol-5(2H)-ylidene]ethyl phosphate + 2 H2O + H(+). It participates in cofactor biosynthesis; thiamine diphosphate biosynthesis. Functionally, catalyzes the rearrangement of 1-deoxy-D-xylulose 5-phosphate (DXP) to produce the thiazole phosphate moiety of thiamine. Sulfur is provided by the thiocarboxylate moiety of the carrier protein ThiS. In vitro, sulfur can be provided by H(2)S. The chain is Thiazole synthase from Burkholderia thailandensis (strain ATCC 700388 / DSM 13276 / CCUG 48851 / CIP 106301 / E264).